Consider the following 928-residue polypeptide: BCAS3 microtubule associated cell migration factor (928 aa).

Met1 carries the post-translational modification N-acetylmethionine. Lys215 is covalently cross-linked (Glycyl lysine isopeptide (Lys-Gly) (interchain with G-Cter in SUMO1); alternate). Lys215 participates in a covalent cross-link: Glycyl lysine isopeptide (Lys-Gly) (interchain with G-Cter in SUMO2); alternate. Required for recruitment to preautophagosomal structure in response to mitophagy stretches follow at residues 254–312 and 437–560; these read RGGA…SRRS and YGGQ…IKAP. Phosphoserine occurs at positions 461, 480, and 488. 2 disordered regions span residues 472 to 518 and 795 to 816; these read TSKQ…PRLS and VRSDPVSMPGSSRAVSDRRGVS. Composition is skewed to low complexity over residues 480-494 and 505-514; these read SPVPGLSSSPSGSPL and NNFTNNNPGN. Phosphoserine is present on residues Ser838, Ser886, and Ser898. The disordered stretch occupies residues 868–928; the sequence is ESPSRDVVGS…PLSLFPTGFP (61 aa). Over residues 887 to 901 the composition is skewed to low complexity; the sequence is IETLSNSSGSTSGSI.

The protein belongs to the BCAS3 family. As to quaternary structure, interacts with histone H3, ESR1, KAT2B and PELP1; the interactions occur in a estrogen-dependent manner. Interacts with beta-tubulin and VIM. Interacts (via C-terminal) with PHAF1; the interaction is requrired for the association with the phagophore. Expressed in blood islands and yolk sac blood islands (at protein level). Highly expressed in mammary tumors. Expressed in eostrogen-induced epithelial cells of mammary glands. Expressed in brain, heart, kidney, lung, liver and spleen. Expressed in embryonic stem cells, embryoid bodies, endothelial cells and fibroblasts.

Its subcellular location is the nucleus. It is found in the cytoplasm. The protein resides in the cytoskeleton. The protein localises to the preautophagosomal structure. Functions synergistically with PELP1 as a transcriptional coactivator of estrogen receptor-responsive genes. Stimulates histone acetyltransferase activity. Binds to chromatin. Plays a role in angiogenesis. Participates in the regulation of cell polarity and directional endothelial cell migration by mediating both the activation and recruitment of CDC42 and the reorganization of the actin cytoskeleton at the cell leading edge. Promotes filipodia formation. Plays a regulatory role in autophagic activity. In complex with PHAF1, associates with the preautophagosomal structure during both non-selective and selective autophagy. Probably binds phosphatidylinositol 3-phosphate (PtdIns3P) which would mediate the recruitment preautophagosomal structures. This Mus musculus (Mouse) protein is BCAS3 microtubule associated cell migration factor.